A 253-amino-acid chain; its full sequence is Protein PET20, mitochondrial (253 aa).

A mitochondrion-targeting transit peptide spans 1-36 (MLKLARPFIPPLSRNNAISSGIVLTSRRFQSSFTFL). The interval 44 to 93 (KNQMKSKRKKGSKKAAYHRQPPEHEHTAPLIKQNKTITKKEHSDVRGSHL) is disordered. A compositionally biased stretch (basic residues) spans 47–60 (MKSKRKKGSKKAAY). Basic and acidic residues predominate over residues 81–90 (TKKEHSDVRG).

The protein resides in the mitochondrion. Its function is as follows. Required for respiratory growth, stability of the mitochondrial genome and for proper assembly or maintenance of mitochondrial proteins. This chain is Protein PET20, mitochondrial (PET20), found in Saccharomyces cerevisiae (strain ATCC 204508 / S288c) (Baker's yeast).